Consider the following 316-residue polypeptide: Ribosomal RNA small subunit methyltransferase H (316 aa).

S-adenosyl-L-methionine contacts are provided by residues 35–37 (AGH), Asp-55, Phe-84, Asp-105, and Gln-112.

This sequence belongs to the methyltransferase superfamily. RsmH family.

It is found in the cytoplasm. It catalyses the reaction cytidine(1402) in 16S rRNA + S-adenosyl-L-methionine = N(4)-methylcytidine(1402) in 16S rRNA + S-adenosyl-L-homocysteine + H(+). In terms of biological role, specifically methylates the N4 position of cytidine in position 1402 (C1402) of 16S rRNA. This Streptococcus pneumoniae (strain 70585) protein is Ribosomal RNA small subunit methyltransferase H.